Reading from the N-terminus, the 601-residue chain is Membrane protein insertase YidC (601 aa).

The chain crosses the membrane as a helical span at residues 10-30 (ISISLVILVLFQVIASYVLPP). The disordered stretch occupies residues 34–63 (APPHPATQTAQTQPVSGQPAPGVPAPSAVP). Over residues 39-53 (ATQTAQTQPVSGQPA) the composition is skewed to low complexity. The segment covering 54 to 63 (PGVPAPSAVP) has biased composition (pro residues). The next 4 membrane-spanning stretches (helical) occupy residues 382 to 404 (FGNM…FPLV), 455 to 475 (LPML…FISI), 510 to 530 (ALSP…TMWG), and 549 to 569 (FMPV…VLYY).

It belongs to the OXA1/ALB3/YidC family. Type 1 subfamily. Interacts with the Sec translocase complex via SecD. Specifically interacts with transmembrane segments of nascent integral membrane proteins during membrane integration.

Its subcellular location is the cell inner membrane. In terms of biological role, required for the insertion and/or proper folding and/or complex formation of integral membrane proteins into the membrane. Involved in integration of membrane proteins that insert both dependently and independently of the Sec translocase complex, as well as at least some lipoproteins. Aids folding of multispanning membrane proteins. The chain is Membrane protein insertase YidC from Acidiphilium cryptum (strain JF-5).